A 291-amino-acid chain; its full sequence is Secretory carrier-associated membrane protein 5 (291 aa).

A compositionally biased stretch (basic and acidic residues) spans 1-10 (MGGRYDRNTF). The segment at 1–66 (MGGRYDRNTF…GSGAQDLKKK (66 aa)) is disordered. Residues 1-126 (MGGRYDRNTF…EILVRLQRLQ (126 aa)) lie on the Cytoplasmic side of the membrane. The residue at position 34 (serine 34) is a Phosphoserine. Positions 58–94 (SGAQDLKKKEKELQAKEADLRRREQDLKRKQDAAARA) form a coiled coil. The next 4 helical transmembrane spans lie at 127–147 (YIAF…IIAV), 159–179 (IWLL…VLWY), 194–214 (FGWF…AAVA), and 242–262 (IFYF…IWVI). The Cytoplasmic portion of the chain corresponds to 263–288 (QQVYMYFRGSGKADDMRRDAARGAMR).

This sequence belongs to the SCAMP family.

It localises to the cell membrane. The protein localises to the cytoplasmic vesicle. The protein resides in the secretory vesicle membrane. Functionally, probably involved in membrane trafficking. The chain is Secretory carrier-associated membrane protein 5 (SCAMP5) from Arabidopsis thaliana (Mouse-ear cress).